The primary structure comprises 356 residues: Nicotinate-nucleotide--dimethylbenzimidazole phosphoribosyltransferase (356 aa).

Catalysis depends on Glu317, which acts as the Proton acceptor.

The protein belongs to the CobT family. Homodimer.

The catalysed reaction is 5,6-dimethylbenzimidazole + nicotinate beta-D-ribonucleotide = alpha-ribazole 5'-phosphate + nicotinate + H(+). Its pathway is nucleoside biosynthesis; alpha-ribazole biosynthesis; alpha-ribazole from 5,6-dimethylbenzimidazole: step 1/2. Its function is as follows. Catalyzes the synthesis of alpha-ribazole-5'-phosphate from nicotinate mononucleotide (NAMN) and 5,6-dimethylbenzimidazole (DMB). This is Nicotinate-nucleotide--dimethylbenzimidazole phosphoribosyltransferase from Salmonella schwarzengrund (strain CVM19633).